A 188-amino-acid chain; its full sequence is Ribosome-recycling factor (188 aa).

It belongs to the RRF family.

It is found in the cytoplasm. In terms of biological role, responsible for the release of ribosomes from messenger RNA at the termination of protein biosynthesis. May increase the efficiency of translation by recycling ribosomes from one round of translation to another. The sequence is that of Ribosome-recycling factor from Granulibacter bethesdensis (strain ATCC BAA-1260 / CGDNIH1).